Here is a 257-residue protein sequence, read N- to C-terminus: MLAKRIVPCLDVREGKVVKGVQFRNHEIVGDIVPLAARYAEEGADELVFYDITASAHDRVIDKSWVSRVAEQIDIPFCVAGGIKTIEQAREKLAFGADKISINSPALSDPSLISRLQDEFGRQCIVIGIDSFYDAVSDSYKVKQFTGDEAATKDTQWYTQDWVEEVQKRGCGEIVLNVMNQDGVRGGYDIKQLSIVRAICDVPLIASGGAGTMEHFKAVFELAKVDAALAASVFHKGIIDIGELKQYLHANNIAIRL.

Active-site residues include aspartate 11 and aspartate 130.

Belongs to the HisA/HisF family. In terms of assembly, heterodimer of HisH and HisF.

Its subcellular location is the cytoplasm. It catalyses the reaction 5-[(5-phospho-1-deoxy-D-ribulos-1-ylimino)methylamino]-1-(5-phospho-beta-D-ribosyl)imidazole-4-carboxamide + L-glutamine = D-erythro-1-(imidazol-4-yl)glycerol 3-phosphate + 5-amino-1-(5-phospho-beta-D-ribosyl)imidazole-4-carboxamide + L-glutamate + H(+). The protein operates within amino-acid biosynthesis; L-histidine biosynthesis; L-histidine from 5-phospho-alpha-D-ribose 1-diphosphate: step 5/9. Its function is as follows. IGPS catalyzes the conversion of PRFAR and glutamine to IGP, AICAR and glutamate. The HisF subunit catalyzes the cyclization activity that produces IGP and AICAR from PRFAR using the ammonia provided by the HisH subunit. The polypeptide is Imidazole glycerol phosphate synthase subunit HisF (Shewanella frigidimarina (strain NCIMB 400)).